The primary structure comprises 245 residues: Orotidine 5'-phosphate decarboxylase (245 aa).

Substrate is bound by residues Asp-22, Lys-44, 71–80 (DLKFHDIPNT), Thr-131, Arg-192, Gln-201, Gly-221, and Arg-222. Lys-73 functions as the Proton donor in the catalytic mechanism.

The protein belongs to the OMP decarboxylase family. Type 1 subfamily. In terms of assembly, homodimer.

It carries out the reaction orotidine 5'-phosphate + H(+) = UMP + CO2. Its pathway is pyrimidine metabolism; UMP biosynthesis via de novo pathway; UMP from orotate: step 2/2. Functionally, catalyzes the decarboxylation of orotidine 5'-monophosphate (OMP) to uridine 5'-monophosphate (UMP). This Escherichia fergusonii (strain ATCC 35469 / DSM 13698 / CCUG 18766 / IAM 14443 / JCM 21226 / LMG 7866 / NBRC 102419 / NCTC 12128 / CDC 0568-73) protein is Orotidine 5'-phosphate decarboxylase.